The sequence spans 111 residues: Urease subunit beta (111 aa).

It belongs to the urease beta subunit family. In terms of assembly, heterotrimer of UreA (gamma), UreB (beta) and UreC (alpha) subunits. Three heterotrimers associate to form the active enzyme.

The protein localises to the cytoplasm. The enzyme catalyses urea + 2 H2O + H(+) = hydrogencarbonate + 2 NH4(+). It participates in nitrogen metabolism; urea degradation; CO(2) and NH(3) from urea (urease route): step 1/1. The polypeptide is Urease subunit beta (Psychrobacter cryohalolentis (strain ATCC BAA-1226 / DSM 17306 / VKM B-2378 / K5)).